The following is a 238-amino-acid chain: Enolase-phosphatase E1 (238 aa).

This sequence belongs to the HAD-like hydrolase superfamily. MasA/MtnC family. In terms of assembly, monomer. Mg(2+) serves as cofactor.

The catalysed reaction is 5-methylsulfanyl-2,3-dioxopentyl phosphate + H2O = 1,2-dihydroxy-5-(methylsulfanyl)pent-1-en-3-one + phosphate. It functions in the pathway amino-acid biosynthesis; L-methionine biosynthesis via salvage pathway; L-methionine from S-methyl-5-thio-alpha-D-ribose 1-phosphate: step 3/6. It participates in amino-acid biosynthesis; L-methionine biosynthesis via salvage pathway; L-methionine from S-methyl-5-thio-alpha-D-ribose 1-phosphate: step 4/6. In terms of biological role, bifunctional enzyme that catalyzes the enolization of 2,3-diketo-5-methylthiopentyl-1-phosphate (DK-MTP-1-P) into the intermediate 2-hydroxy-3-keto-5-methylthiopentenyl-1-phosphate (HK-MTPenyl-1-P), which is then dephosphorylated to form the acireductone 1,2-dihydroxy-3-keto-5-methylthiopentene (DHK-MTPene). This chain is Enolase-phosphatase E1, found in Synechococcus elongatus (strain ATCC 33912 / PCC 7942 / FACHB-805) (Anacystis nidulans R2).